Reading from the N-terminus, the 434-residue chain is 3-ketoacyl-CoA thiolase A, peroxisomal (434 aa).

The transit peptide at 1-36 directs the protein to the peroxisome; sequence MSESVGRTSAMHRLQVVLGHLAGRPESSSALQAAPC. The interval 11 to 36 is PTS2-type peroxisomal targeting signal; sequence MHRLQVVLGHLAGRPESSSALQAAPC. Residue C133 is the Acyl-thioester intermediate of the active site. Residues K183 and K244 each carry the N6-acetyllysine modification. Catalysis depends on proton acceptor residues H387 and C418.

It belongs to the thiolase-like superfamily. Thiolase family. Homodimer. Interacts (via PTS2-type peroxisomal targeting signal region) with PEX7; leading to its translocation into peroxisomes.

Its subcellular location is the peroxisome. The catalysed reaction is an acyl-CoA + acetyl-CoA = a 3-oxoacyl-CoA + CoA. The enzyme catalyses 2 acetyl-CoA = acetoacetyl-CoA + CoA. It carries out the reaction tetradecanoyl-CoA + acetyl-CoA = 3-oxohexadecanoyl-CoA + CoA. It catalyses the reaction hexanoyl-CoA + acetyl-CoA = 3-oxooctanoyl-CoA + CoA. The catalysed reaction is 3-oxohexadecanedioyl-CoA + CoA = tetradecanedioyl-CoA + acetyl-CoA. The enzyme catalyses 3-oxo-(6Z,9Z,12Z,15Z,18Z,21Z)-tetracosahexaenoyl-CoA + CoA = (4Z,7Z,10Z,13Z,16Z,19Z)-docosahexaenoyl-CoA + acetyl-CoA. It functions in the pathway lipid metabolism; peroxisomal fatty acid beta-oxidation. Responsible for the thiolytic cleavage of straight chain 3-keto fatty acyl-CoAs (3-oxoacyl-CoAs). Plays an important role in fatty acid peroxisomal beta-oxidation. Catalyzes the cleavage of short, medium, long, and very long straight chain 3-oxoacyl-CoAs. Medium chain straight 3-oxoacyl-CoAs are preferred substrates. This chain is 3-ketoacyl-CoA thiolase A, peroxisomal, found in Rattus norvegicus (Rat).